The chain runs to 229 residues: Lipoprotein-releasing system ATP-binding protein LolD (229 aa).

Positions 9-228 (HGLRKIYREA…QDGNLVQVEV (220 aa)) constitute an ABC transporter domain. 42-49 (GSSGSGKS) is a binding site for ATP.

It belongs to the ABC transporter superfamily. Lipoprotein translocase (TC 3.A.1.125) family. The complex is composed of two ATP-binding proteins (LolD) and two transmembrane proteins (LolC and LolE).

It is found in the cell inner membrane. In terms of biological role, part of the ABC transporter complex LolCDE involved in the translocation of mature outer membrane-directed lipoproteins, from the inner membrane to the periplasmic chaperone, LolA. Responsible for the formation of the LolA-lipoprotein complex in an ATP-dependent manner. The protein is Lipoprotein-releasing system ATP-binding protein LolD of Photobacterium profundum (strain SS9).